The chain runs to 146 residues: Snaclec CTL-Eoc124 (146 aa).

The first 23 residues, 1–23 (MGRFISVSFGLLVVFLSLSGTGA), serve as a signal peptide directing secretion. 3 disulfide bridges follow: Cys25-Cys36, Cys53-Cys142, and Cys119-Cys134. Residues 32–143 (YQGHCYRVFN…CSRTNNVACK (112 aa)) enclose the C-type lectin domain.

The protein belongs to the snaclec family. As to quaternary structure, heterodimer; disulfide-linked. In terms of tissue distribution, expressed by the venom gland.

It is found in the secreted. Interferes with one step of hemostasis (modulation of platelet aggregation, or coagulation cascade, for example). This is Snaclec CTL-Eoc124 from Echis ocellatus (Ocellated saw-scaled viper).